The sequence spans 419 residues: Phosphoglycerate kinase (419 aa).

Substrate-binding positions include 21–23 (DFN), arginine 36, 60–63 (HLGD), arginine 137, and arginine 174. Residues lysine 225, glycine 316, glutamate 347, and 376–379 (GGDS) contribute to the ATP site.

Belongs to the phosphoglycerate kinase family. Monomer.

It localises to the cytoplasm. It carries out the reaction (2R)-3-phosphoglycerate + ATP = (2R)-3-phospho-glyceroyl phosphate + ADP. It participates in carbohydrate degradation; glycolysis; pyruvate from D-glyceraldehyde 3-phosphate: step 2/5. In Treponema pallidum (strain Nichols), this protein is Phosphoglycerate kinase (pgk).